We begin with the raw amino-acid sequence, 177 residues long: Large ribosomal subunit protein uL6 (177 aa).

Belongs to the universal ribosomal protein uL6 family. Part of the 50S ribosomal subunit.

Its function is as follows. This protein binds to the 23S rRNA, and is important in its secondary structure. It is located near the subunit interface in the base of the L7/L12 stalk, and near the tRNA binding site of the peptidyltransferase center. This is Large ribosomal subunit protein uL6 from Klebsiella pneumoniae (strain 342).